Consider the following 89-residue polypeptide: Small ribosomal subunit protein uS15 (89 aa).

Belongs to the universal ribosomal protein uS15 family. Part of the 30S ribosomal subunit. Forms a bridge to the 50S subunit in the 70S ribosome, contacting the 23S rRNA.

One of the primary rRNA binding proteins, it binds directly to 16S rRNA where it helps nucleate assembly of the platform of the 30S subunit by binding and bridging several RNA helices of the 16S rRNA. Functionally, forms an intersubunit bridge (bridge B4) with the 23S rRNA of the 50S subunit in the ribosome. This is Small ribosomal subunit protein uS15 from Ectopseudomonas mendocina (strain ymp) (Pseudomonas mendocina).